Here is a 94-residue protein sequence, read N- to C-terminus: MSCQIFEKLEAVIRQRIAEGNPQSYTYRLYSSGVSTIARKVGEEAVEVAVAALAEGRERVVEESADLLYHLLVLLNSLGLSLGDVCKELERRMK.

The protein belongs to the PRA-PH family.

Its subcellular location is the cytoplasm. The enzyme catalyses 1-(5-phospho-beta-D-ribosyl)-ATP + H2O = 1-(5-phospho-beta-D-ribosyl)-5'-AMP + diphosphate + H(+). Its pathway is amino-acid biosynthesis; L-histidine biosynthesis; L-histidine from 5-phospho-alpha-D-ribose 1-diphosphate: step 2/9. The sequence is that of Phosphoribosyl-ATP pyrophosphatase (hisE) from Pyrobaculum aerophilum (strain ATCC 51768 / DSM 7523 / JCM 9630 / CIP 104966 / NBRC 100827 / IM2).